The primary structure comprises 362 residues: 3-dehydroquinate synthase (362 aa).

Residues 70–75 (DGEKYK), 104–108 (GVIGD), 128–129 (TT), lysine 141, lysine 150, and 168–171 (TLNT) each bind NAD(+). The Zn(2+) site is built by glutamate 183, histidine 246, and histidine 263.

Belongs to the sugar phosphate cyclases superfamily. Dehydroquinate synthase family. Requires NAD(+) as cofactor. The cofactor is Co(2+). It depends on Zn(2+) as a cofactor.

It is found in the cytoplasm. It carries out the reaction 7-phospho-2-dehydro-3-deoxy-D-arabino-heptonate = 3-dehydroquinate + phosphate. Its pathway is metabolic intermediate biosynthesis; chorismate biosynthesis; chorismate from D-erythrose 4-phosphate and phosphoenolpyruvate: step 2/7. Its function is as follows. Catalyzes the conversion of 3-deoxy-D-arabino-heptulosonate 7-phosphate (DAHP) to dehydroquinate (DHQ). This chain is 3-dehydroquinate synthase, found in Haemophilus influenzae (strain ATCC 51907 / DSM 11121 / KW20 / Rd).